Reading from the N-terminus, the 380-residue chain is MQTLLDTAHCRLTLYRYPRQLQDPLQAWDAADEYLINTLAEEPLERDGPVIIMNDGFGALAAYLHGHAPVSVTDSHISEQATLANLAENGLDPHAIRLQDALASLPDAPALVVIKVSKYQALLEQQLLALRQVATPATRVIAAGKAKDIHSSTLALFEKYLGPTRTSLAWKKARLIHCTPVATPTERPALANPFPTVWPLEGTDMLIHNHANVFSRTSLDIGARFMLDNLPIHSARKVIDLGCGNGVLGLSLLARDAEVEVTFIDESHMAVASARLNVEHNLPAALPRTHFLVNNCLDGVAVGSVDRILCNPPFHQLQAITDHIAWQMFSDAHRVLPKGGELWIVGNRHLDYHNKLKRLFANAQVVASNSKFVILKAIKR.

This sequence belongs to the methyltransferase superfamily. RlmG family.

The protein resides in the cytoplasm. The catalysed reaction is guanosine(1835) in 23S rRNA + S-adenosyl-L-methionine = N(2)-methylguanosine(1835) in 23S rRNA + S-adenosyl-L-homocysteine + H(+). Functionally, specifically methylates the guanine in position 1835 (m2G1835) of 23S rRNA. The polypeptide is Ribosomal RNA large subunit methyltransferase G (Aeromonas hydrophila subsp. hydrophila (strain ATCC 7966 / DSM 30187 / BCRC 13018 / CCUG 14551 / JCM 1027 / KCTC 2358 / NCIMB 9240 / NCTC 8049)).